We begin with the raw amino-acid sequence, 369 residues long: Peptide chain release factor 2 (369 aa).

An N5-methylglutamine modification is found at Gln251.

It belongs to the prokaryotic/mitochondrial release factor family. In terms of processing, methylated by PrmC. Methylation increases the termination efficiency of RF2.

It localises to the cytoplasm. Peptide chain release factor 2 directs the termination of translation in response to the peptide chain termination codons UGA and UAA. In Chlamydia pneumoniae (Chlamydophila pneumoniae), this protein is Peptide chain release factor 2 (prfB).